The following is a 331-amino-acid chain: DNA-directed RNA polymerase subunit alpha (331 aa).

The tract at residues 1–242 (MEKFLRYNIQ…EHYKPIVTEL (242 aa)) is alpha N-terminal domain (alpha-NTD). Residues 258–331 (VSSSKSSLAI…RNLKLKEEQN (74 aa)) are alpha C-terminal domain (alpha-CTD).

Belongs to the RNA polymerase alpha chain family. As to quaternary structure, homodimer. The RNAP catalytic core consists of 2 alpha, 1 beta, 1 beta' and 1 omega subunit. When a sigma factor is associated with the core the holoenzyme is formed, which can initiate transcription.

It catalyses the reaction RNA(n) + a ribonucleoside 5'-triphosphate = RNA(n+1) + diphosphate. DNA-dependent RNA polymerase catalyzes the transcription of DNA into RNA using the four ribonucleoside triphosphates as substrates. This is DNA-directed RNA polymerase subunit alpha from Malacoplasma penetrans (strain HF-2) (Mycoplasma penetrans).